Consider the following 61-residue polypeptide: Small ribosomal subunit protein uS14 (61 aa).

Positions 24, 27, 40, and 43 each coordinate Zn(2+).

This sequence belongs to the universal ribosomal protein uS14 family. Zinc-binding uS14 subfamily. As to quaternary structure, part of the 30S ribosomal subunit. Contacts proteins S3 and S10. Requires Zn(2+) as cofactor.

Its function is as follows. Binds 16S rRNA, required for the assembly of 30S particles and may also be responsible for determining the conformation of the 16S rRNA at the A site. This is Small ribosomal subunit protein uS14 from Campylobacter jejuni subsp. jejuni serotype O:6 (strain 81116 / NCTC 11828).